The sequence spans 647 residues: MAAGLATWLPFARAAAVGWLPLAQQPLPPAPGVKASRGDEVLVVNVSGRRFETWKNTLDRYPDTLLGSSEKEFFYDADSGEYFFDRDPDMFRHVLNFYRTGRLHCPRQECIQAFDEELAFYGLVPELVGDCCLEEYRDRKKENAERLAEDEEAEQAGDGPALPAGSSLRQRLWRAFENPHTSTAALVFYYVTGFFIAVSVIANVVETIPCRGSARRSSREQPCGERFPQAFFCMDTACVLIFTGEYLLRLFAAPSRCRFLRSVMSLIDVVAILPYYIGLLVPKNDDVSGAFVTLRVFRVFRIFKFSRHSQGLRILGYTLKSCASELGFLLFSLTMAIIIFATVMFYAEKGTNKTNFTSIPAAFWYTIVTMTTLGYGDMVPSTIAGKIFGSICSLSGVLVIALPVPVIVSNFSRIYHQNQRADKRRAQQKVRLARIRLAKSGTTNAFLQYKQNGGLEDSGSGEEQALCVRNRSAFEQQHHHLLHCLEKTTCHEFTDELTFSEALGAVSPGGRTSRSTSVSSQPVGPGSLLSSCCPRRAKRRAIRLANSTASVSRGSMQELDMLAGLRRSHAPQSRSSLNAKPHDSLDLNCDSRDFVAAIISIPTPPANTPDESQPSSPGGGGRAGSTLRNSSLGTPCLFPETVKISSL.

Residues 1–183 (MAAGLATWLP…RAFENPHTST (183 aa)) lie on the Cytoplasmic side of the membrane. Positions 2–20 (AAGLATWLPFARAAAVGWL) are interaction with KCNIP1, KCNIP2, and other family members. Zn(2+) contacts are provided by His-104, Cys-131, and Cys-132. The disordered stretch occupies residues 144–163 (AERLAEDEEAEQAGDGPALP). Residues 184-205 (AALVFYYVTGFFIAVSVIANVV) traverse the membrane as a helical segment. The Extracellular segment spans residues 206-230 (ETIPCRGSARRSSREQPCGERFPQA). Residues 231–252 (FFCMDTACVLIFTGEYLLRLFA) form a helical membrane-spanning segment. The Cytoplasmic segment spans residues 253–263 (APSRCRFLRSV). Residues 264-284 (MSLIDVVAILPYYIGLLVPKN) form a helical membrane-spanning segment. Topologically, residues 285–287 (DDV) are extracellular. The chain crosses the membrane as a helical; Voltage-sensor span at residues 288 to 308 (SGAFVTLRVFRVFRIFKFSRH). Over 309-323 (SQGLRILGYTLKSCA) the chain is Cytoplasmic. The tract at residues 310 to 323 (QGLRILGYTLKSCA) is S4-S5 linker. A helical membrane pass occupies residues 324–345 (SELGFLLFSLTMAIIIFATVMF). Residues 346–359 (YAEKGTNKTNFTSI) lie on the Extracellular side of the membrane. N-linked (GlcNAc...) asparagine glycans are attached at residues Asn-352 and Asn-355. The segment at residues 360–371 (PAAFWYTIVTMT) is an intramembrane region (helical). Positions 372–377 (TLGYGD) match the Selectivity filter motif. Residues 372 to 379 (TLGYGDMV) lie within the membrane without spanning it. The Extracellular segment spans residues 380-386 (PSTIAGK). The helical transmembrane segment at 387–415 (IFGSICSLSGVLVIALPVPVIVSNFSRIY) threads the bilayer. Over 416-647 (HQNQRADKRR…FPETVKISSL (232 aa)) the chain is Cytoplasmic. A Phosphoserine modification is found at Ser-458. A required for dendritic targeting region spans residues 474-489 (FEQQHHHLLHCLEKTT). Positions 506 to 524 (VSPGGRTSRSTSVSSQPVG) are enriched in low complexity. The tract at residues 506–531 (VSPGGRTSRSTSVSSQPVGPGSLLSS) is disordered. The residue at position 555 (Ser-555) is a Phosphoserine. Residues 601–634 (IPTPPANTPDESQPSSPGGGGRAGSTLRNSSLGT) form a disordered region.

This sequence belongs to the potassium channel family. D (Shal) (TC 1.A.1.2) subfamily. Kv4.1/KCND1 sub-subfamily. In terms of assembly, component of heteromultimeric potassium channels. Identified in potassium channel complexes containing KCND1, KCND2, KCND3, KCNIP1, KCNIP2, KCNIP3, KCNIP4, DPP6 and DPP10. Widely expressed. Highly expressed in brain, in particular in cerebellum and thalamus; detected at lower levels in the other parts of the brain.

Its subcellular location is the cell membrane. It carries out the reaction K(+)(in) = K(+)(out). A-type voltage-gated potassium channel that mediates transmembrane potassium transport in excitable membranes in the brain. Mediates A-type current I(SA) in suprachiasmatic nucleus (SCN) neurons. Exhibits a low-threshold A-type current with a hyperpolarized steady-state inactivation midpoint and the recovery process was steeply voltage-dependent, with recovery being markedly faster at more negative potentials. May regulates repetitive firing rates in the suprachiasmatic nucleus (SCN) neurons and circadian rhythms in neuronal excitability and behavior. Contributes to the regulation of the circadian rhythm of action potential firing in suprachiasmatic nucleus neurons, which regulates the circadian rhythm of locomotor activity. The regulatory subunit KCNIP1 modulates the kinetics of channel inactivation, increases the current amplitudes and accelerates recovery from inactivation, shifts activation in a depolarizing direction. The regulatory subunit DPP10 decreases the voltage sensitivity of the inactivation channel gating. The sequence is that of A-type voltage-gated potassium channel KCND1 from Homo sapiens (Human).